Consider the following 114-residue polypeptide: Small ribosomal subunit protein bS6 (114 aa).

This sequence belongs to the bacterial ribosomal protein bS6 family.

Its function is as follows. Binds together with bS18 to 16S ribosomal RNA. The sequence is that of Small ribosomal subunit protein bS6 from Bacteroides thetaiotaomicron (strain ATCC 29148 / DSM 2079 / JCM 5827 / CCUG 10774 / NCTC 10582 / VPI-5482 / E50).